A 457-amino-acid polypeptide reads, in one-letter code: Cysteine desulfurase (457 aa).

Pyridoxal 5'-phosphate is bound by residues Ala127, Thr128, Gln235, Ser255, and His257. Lys258 carries the post-translational modification N6-(pyridoxal phosphate)lysine. Residue Thr295 coordinates pyridoxal 5'-phosphate. Catalysis depends on Cys381, which acts as the Cysteine persulfide intermediate. Cys381 provides a ligand contact to [2Fe-2S] cluster. Residue Cys381 coordinates Zn(2+). Position 381 is a cysteine persulfide (Cys381).

It belongs to the class-V pyridoxal-phosphate-dependent aminotransferase family. NifS/IscS subfamily. In terms of assembly, homodimer. Component of the mitochondrial core iron-sulfur cluster (ISC) complex composed of NFS1, LYRM4, NDUFAB1, ISCU, FXN, and FDX2; this complex is a heterohexamer containing two copies of each monomer. Component of cyteine desulfurase complex composed of NFS1, LYRM4 and NDUFAB1; this complex contributes to the activation of cysteine desulfurase activity and NFS1 stabilization. Interacts (homodimer form) with ISCU (D-state); each monomer interacts with the C-terminal regions of each NFS1 monomer. Interacts with HSPA9. Interacts (via homodimer form) with FDX2. Interacts (via homodimer form) with FXN. Interacts with LYRM4. Component of a complex composed of FXN, NFS1, LYRM4 and ISCU. As to quaternary structure, monomer. Homodimer. Oligomer. Interacts with ISCU. Component of the cysteine desulfurase complex composed of NFS1 and LYRM4; this complex contributes to the activation of cysteine desulfurase activity. Interacts with MOCS3. Pyridoxal 5'-phosphate is required as a cofactor. N-gluconoylated. In terms of processing, cysteine persulfide intermediate is reduced by thiol-containing molecules like glutathione and L-cysteine. Persulfide reduction is a rate-limiting step of cysteine desulfurase catalytic cycle.

It localises to the mitochondrion. The protein localises to the cytoplasm. The protein resides in the nucleus. It is found in the cytoskeleton. Its subcellular location is the microtubule organizing center. It localises to the centrosome. The catalysed reaction is (sulfur carrier)-H + L-cysteine = (sulfur carrier)-SH + L-alanine. It carries out the reaction L-cysteinyl-[cysteine desulfurase] + L-cysteine = S-sulfanyl-L-cysteinyl-[cysteine desulfurase] + L-alanine. Its activity is regulated as follows. Active only in complex with LYRM4. Functionally, cysteine desulfurase, of the core iron-sulfur cluster (ISC) assembly complex, that catalyzes the desulfuration of L-cysteine to L-alanine, as component of the cysteine desulfurase complex leading to the formation of a cysteine persulfide intermediate at the active site cysteine residue and participates in the [2Fe-2S] clusters assembly on the scaffolding protein ISCU. The persulfide is then transferred on the flexible Cys loop from the catalytic site of NFS1 to the surface of NFS1. After the NFS1-linked persulfide sulfur is transferred to one of the conserved Cys residues of the scaffold, a reaction assisted by FXN. The core iron-sulfur cluster (ISC) assembly complex is involved in the de novo synthesis of a [2Fe-2S] cluster, the first step of the mitochondrial iron-sulfur protein biogenesis. This process is initiated by the cysteine desulfurase complex (NFS1:LYRM4:NDUFAB1) that produces persulfide which is delivered on the scaffold protein ISCU in a FXN-dependent manner. Then this complex is stabilized by FDX2 which provides reducing equivalents to accomplish the [2Fe-2S] cluster assembly. Finally, the [2Fe-2S] cluster is transferred from ISCU to chaperone proteins, including HSCB, HSPA9 and GLRX5. May catalyze the desulfuration of L-cysteine to L-alanine as component of the cysteine desulfurase complex (NFS1:LYRM4), leading to the formation of a cysteine persulfide intermediate. Acts as a sulfur donor for MOCS3 by transferring the sulfur of the cysteine persulfide intermediate on MOCS3. The protein is Cysteine desulfurase of Pongo abelii (Sumatran orangutan).